We begin with the raw amino-acid sequence, 194 residues long: Imidazoleglycerol-phosphate dehydratase (194 aa).

It belongs to the imidazoleglycerol-phosphate dehydratase family.

It is found in the cytoplasm. It catalyses the reaction D-erythro-1-(imidazol-4-yl)glycerol 3-phosphate = 3-(imidazol-4-yl)-2-oxopropyl phosphate + H2O. It participates in amino-acid biosynthesis; L-histidine biosynthesis; L-histidine from 5-phospho-alpha-D-ribose 1-diphosphate: step 6/9. This is Imidazoleglycerol-phosphate dehydratase from Ruminiclostridium cellulolyticum (strain ATCC 35319 / DSM 5812 / JCM 6584 / H10) (Clostridium cellulolyticum).